We begin with the raw amino-acid sequence, 156 residues long: Ribosomal RNA large subunit methyltransferase H (156 aa).

S-adenosyl-L-methionine is bound by residues leucine 73, glycine 104, and 123-128 (LSPLTL).

The protein belongs to the RNA methyltransferase RlmH family. As to quaternary structure, homodimer.

Its subcellular location is the cytoplasm. The enzyme catalyses pseudouridine(1915) in 23S rRNA + S-adenosyl-L-methionine = N(3)-methylpseudouridine(1915) in 23S rRNA + S-adenosyl-L-homocysteine + H(+). Specifically methylates the pseudouridine at position 1915 (m3Psi1915) in 23S rRNA. The chain is Ribosomal RNA large subunit methyltransferase H from Yersinia pseudotuberculosis serotype O:1b (strain IP 31758).